The chain runs to 68 residues: uncharacterized protein (68 aa).

This is an uncharacterized protein from Salmonella typhi.